Here is a 1036-residue protein sequence, read N- to C-terminus: Vacuolar basic amino acid transporter VSB1 (1036 aa).

Residues 1–213 (MGRTIRRRRS…SKFAHYLPAA (213 aa)) are Vacuolar-facing. Phosphoserine occurs at positions 42 and 127. The residue at position 130 (Thr-130) is a Phosphothreonine. Phosphoserine occurs at positions 140, 144, 149, 152, and 153. Residues 214–234 (VLGLLLNILDALSYGMIIFPI) form a helical membrane-spanning segment. Over 235-236 (TE) the chain is Cytoplasmic. The chain crosses the membrane as a helical span at residues 237 to 257 (PVFSHLGPTGISMFYISTIIS). The Vacuolar segment spans residues 258–269 (QAVYSGGWSSFP). Residues 270-290 (SGIGSEMIEITPFYHTMALAI) traverse the membrane as a helical segment. At 291–300 (KEALAGNDDE) the chain is on the cytoplasmic side. A helical membrane pass occupies residues 301–321 (IITTTIFCYVISSMLTGVVFY). At 322-338 (ALGKLRLGKIVGFFPRH) the chain is on the vacuolar side. Residues 339 to 359 (ILIGCIGGVGYFLIITGIEVT) traverse the membrane as a helical segment. The Cytoplasmic segment spans residues 360–375 (TRVAKFEYSWPFFSGL). A helical transmembrane segment spans residues 376–396 (FTDYDTLAKWLLPVLLTVVLI). Over 397-405 (GTQRYFKNS) the chain is Vacuolar. The helical transmembrane segment at 406–426 (LVLPSFYILTLVLFHFIVAII) threads the bilayer. Residues 427–473 (PTLSLDALRQAGWIFPIANSDSKWYDHYRLFNVHKVHWSLVLQQIPT) lie on the Cytoplasmic side of the membrane. A helical membrane pass occupies residues 474 to 494 (MMALTFFGILHVPINVPALAM). Topologically, residues 495-515 (SLQMDKYDVDRELIAHGYSNF) are vacuolar. A helical transmembrane segment spans residues 516-536 (FSGLLGSVQNYLVYTNSVLFI). Residues 537–546 (RAGADSPFAG) lie on the Cytoplasmic side of the membrane. Residues 547–567 (FLLIALTICIMIIGPVIISFI) form a helical membrane-spanning segment. Pro-568 is a topological domain (vacuolar). Residues 569 to 589 (ICIVGSLIFLLGYELLVEALV) form a helical membrane-spanning segment. Over 590 to 604 (DTWNKLNRFEYLTVV) the chain is Cytoplasmic. The helical transmembrane segment at 605–625 (IIVFTMGIFDFVLGIIVGILI) threads the bilayer. Residues 626–664 (ACFSFLVDSTKLQTINGEYNGNVARSTVYRDYVQTKFLD) are Vacuolar-facing. One can recognise an STAS domain in the interval 660–781 (TKFLDGIGEQ…ADLNSALEWC (122 aa)). Residues 665 to 685 (GIGEQIYVLKLQNLLFFGTII) form a helical membrane-spanning segment. Over 686–1036 (SIEEKIERLL…ELLGYTLVSA (351 aa)) the chain is Cytoplasmic. At Ser-842 the chain carries Phosphoserine. At Thr-847 the chain carries Phosphothreonine.

It is found in the vacuole membrane. Amino acid transporter involved in vacuolar uptake of basic amino acids for storage during nitrogen replete condititions. May function as an amino acid/proton antiporter. The chain is Vacuolar basic amino acid transporter VSB1 from Saccharomyces cerevisiae (strain ATCC 204508 / S288c) (Baker's yeast).